Consider the following 109-residue polypeptide: Protein GOLVEN 5 (109 aa).

The first 24 residues, 1-24 (MTNITSSFLCLLILLLFCLSFGYS), serve as a signal peptide directing secretion. Positions 25-96 (LHGDKDEVLS…EEDDLVAYTA (72 aa)) are excised as a propeptide. Residues 54–88 (KKAQVRGRSGQEFSKETTKMMMKKTTKKETNVEEE) are disordered. Position 98 is a sulfotyrosine (Y98). P106 carries the post-translational modification Hydroxyproline.

This sequence belongs to the RGF family. As to quaternary structure, binds to LRR receptor-like serine/threonine-protein kinases RGI1, RGI2 and RGI3 to trigger their dimerization with SERK proteins and subsequent signaling. As to expression, expressed in root tips.

It is found in the secreted. Signaling peptide (root growth factor) that maintains the postembryonic root stem cell niche in a PIN2-traffic dependent manner. Root growth factor that regulates the pattern of root growth and lateral root development by modulating the length and the number of cortical cells in the root apical meristem (RAM), and the anticlinal asymmetric cell divisions in lateral root initiation cells. Influences the longitudinal growth rate in the primary root in response to phosphate ion (Pi)-deprivation. The polypeptide is Protein GOLVEN 5 (Arabidopsis thaliana (Mouse-ear cress)).